Consider the following 315-residue polypeptide: GPN-loop GTPase 2 (315 aa).

Residue 12–17 coordinates GTP; that stretch reads GSGKST. The Gly-Pro-Asn (GPN)-loop; involved in dimer interface signature appears at 69–71; it reads GPN. 172 to 175 serves as a coordination point for GTP; the sequence is SKAD.

It belongs to the GPN-loop GTPase family. Heterodimers with gpn1 or fet5/gpn3. Binds to RNA polymerase II (RNAPII).

The protein localises to the cytoplasm. It is found in the nucleus. Its function is as follows. Small GTPase required for proper nuclear import of RNA polymerase II and III (RNAPII and RNAPIII). May act at an RNAP assembly step prior to nuclear import. This is GPN-loop GTPase 2 from Schizosaccharomyces pombe (strain 972 / ATCC 24843) (Fission yeast).